A 485-amino-acid polypeptide reads, in one-letter code: Glutamyl-tRNA(Gln) amidotransferase subunit A (485 aa).

Active-site charge relay system residues include Lys-79 and Ser-154. Residue Ser-178 is the Acyl-ester intermediate of the active site.

The protein belongs to the amidase family. GatA subfamily. As to quaternary structure, heterotrimer of A, B and C subunits.

The enzyme catalyses L-glutamyl-tRNA(Gln) + L-glutamine + ATP + H2O = L-glutaminyl-tRNA(Gln) + L-glutamate + ADP + phosphate + H(+). Allows the formation of correctly charged Gln-tRNA(Gln) through the transamidation of misacylated Glu-tRNA(Gln) in organisms which lack glutaminyl-tRNA synthetase. The reaction takes place in the presence of glutamine and ATP through an activated gamma-phospho-Glu-tRNA(Gln). The chain is Glutamyl-tRNA(Gln) amidotransferase subunit A from Staphylococcus epidermidis (strain ATCC 12228 / FDA PCI 1200).